The chain runs to 62 residues: MARKCLLVKSFIKKPKYSTRNKSRCPLCGRPRGYIRQFGMCRICFREKALRGEIPGVRKASW.

Zn(2+)-binding residues include Cys-25, Cys-28, Cys-41, and Cys-44.

The protein belongs to the universal ribosomal protein uS14 family. Zinc-binding uS14 subfamily. In terms of assembly, part of the 30S ribosomal subunit. Contacts proteins S3 and S10. Requires Zn(2+) as cofactor.

Functionally, binds 16S rRNA, required for the assembly of 30S particles and may also be responsible for determining the conformation of the 16S rRNA at the A site. This Sulfurihydrogenibium sp. (strain YO3AOP1) protein is Small ribosomal subunit protein uS14.